The chain runs to 258 residues: Regulatory protein RecX (258 aa).

Belongs to the RecX family.

It is found in the cytoplasm. Functionally, modulates RecA activity. This is Regulatory protein RecX from Streptococcus pyogenes serotype M3 (strain ATCC BAA-595 / MGAS315).